We begin with the raw amino-acid sequence, 152 residues long: Dehydratase aurZ (152 aa).

The EthD domain maps to 34–129 (PSLSEKEYRH…APDHVNFADT (96 aa)).

The protein belongs to the tpcK family.

It carries out the reaction naphtopyrone YWA1 = norrubrofusarin + H2O + H(+). The protein operates within pigment biosynthesis. In terms of biological role, dehydratase; part of the gene cluster that mediates the biosynthesis of aurofusarin, a red mycelium pigment which is acting as a mycotoxin. The first step is performed by the polyketide synthase which condenses one acetyl-CoA and 6 malonyl-CoA units to form the first intermediate, the cyclic heptaketide and yellow pigment YWA1. The C2 hydroxyl group in the pyrone ring of YWA1 is probably formed during ring closure by an aldol-type cyclization reaction. The dehydratase aurZ then acts as the first tailoring enzyme in the aurofusarin biosynthetic pathway by converting YWA1 to nor-rubrofusarin. Nor-rubrofusarin is then methylated to rubrofusarin by the O-methyltransferase aurJ. Rubrofusarin is then transported across the plasma membrane by the rubrofusarin-specific pump aurT for further enzymatic processing by the extracellular complex composed of GIP1, aurF, aurO and aurS to yield aurofusarin. The chain is Dehydratase aurZ from Gibberella zeae (strain ATCC MYA-4620 / CBS 123657 / FGSC 9075 / NRRL 31084 / PH-1) (Wheat head blight fungus).